The sequence spans 477 residues: MSSAEDGELDPQIQIELENLNSATDEINKLEIELEEANSTFRILLNESTRRLKVSSKKLGNCIEKARPYYEALDKAREAQIECQKAAVKFQRANEIHAAAKETVALAEQRFMSNSHEWQFDNAWQEMLNHATQKVMDAETQKADCHAEHQRLTKLFNAAEQKLQQLEDRFRRSINKSRPYFEEKQVCQDQLQTQKNRIQELQQQVAGAKSTYSTALRNLERISEDIHRQRGDFPTPPGPREPGVGAELNSPTSSALPSLPDFQLELEKCDYPSIAGSQMSLGAKTPQAAAETEDEEDACDYDETGAGELRGVVDERDLEALRQKVKILAVRPIEGGDGQQQNDVWEHELKATVDKLDHLMMLKETAKRQQTNRLKSTEQRPDSLGAEALKRHCDVVEVKVTSCATTASLPVTPHHQLNHLAPPTPIKKLQQQLAPLPSVNVSMRELPLLARLSNELLDRSSAAFGGVRKTLRRRSLE.

The stretch at 12 to 95 (QIQIELENLN…AAVKFQRANE (84 aa)) forms a coiled coil. Phosphoserine occurs at positions 113 and 115. Residues 122 to 221 (NAWQEMLNHA…YSTALRNLER (100 aa)) are a coiled coil. 2 disordered regions span residues 224 to 258 (EDIH…ALPS) and 276 to 306 (GSQM…ETGA). A compositionally biased stretch (acidic residues) spans 291 to 305 (ETEDEEDACDYDETG).

Belongs to the SH3BP5 family.

This Drosophila melanogaster (Fruit fly) protein is SH3 domain-binding protein 5 homolog (pcs).